Here is a 151-residue protein sequence, read N- to C-terminus: MRKAIFPGSFDPLTLGHSDIIKRSIPLFDEIIIAIGVNAEKKYMFSLEDRKRFIKETFKDEPSVSVISYEGLTIDLCKKLGADFILRGLRNPADFEFEKAIAHTNRRLSKIETIFLLTAASTSFISSSIVRDVIRNGGDYSVLVPEAVRVK.

S9 provides a ligand contact to substrate. ATP contacts are provided by residues 9 to 10 (SF) and H17. Residues K41, T73, and R87 each contribute to the substrate site. ATP-binding positions include 88–90 (GLR), E98, and 122–128 (TSFISSS).

The protein belongs to the bacterial CoaD family. As to quaternary structure, homohexamer. It depends on Mg(2+) as a cofactor.

The protein resides in the cytoplasm. It carries out the reaction (R)-4'-phosphopantetheine + ATP + H(+) = 3'-dephospho-CoA + diphosphate. Its pathway is cofactor biosynthesis; coenzyme A biosynthesis; CoA from (R)-pantothenate: step 4/5. Reversibly transfers an adenylyl group from ATP to 4'-phosphopantetheine, yielding dephospho-CoA (dPCoA) and pyrophosphate. The protein is Phosphopantetheine adenylyltransferase of Flavobacterium psychrophilum (strain ATCC 49511 / DSM 21280 / CIP 103535 / JIP02/86).